We begin with the raw amino-acid sequence, 178 residues long: Transmembrane protein 196 (178 aa).

4 helical membrane-spanning segments follow: residues leucine 11–valine 31, serine 47–alanine 67, leucine 73–phenylalanine 93, and leucine 106–leucine 126.

Expression is significantly decreased in lung cancer cells compared to normal lung tissue (at protein level).

It is found in the cytoplasm. The protein resides in the membrane. Acts as a tumor suppressor in lung cancer. Inhibits tumor cell growth by inhibiting cell proliferation and migration and promoting cell apoptosis. Inhibits metastasis of lung cancer by suppressing beta-catenin expression in the Wnt/beta-catenin signaling pathway. The polypeptide is Transmembrane protein 196 (TMEM196) (Homo sapiens (Human)).